The chain runs to 359 residues: Short chain dehydrogenase resG (359 aa).

Positions 87, 110, 137, 237, and 241 each coordinate NADP(+). Catalysis depends on tyrosine 237, which acts as the Proton donor. Lysine 241 functions as the Lowers pKa of active site Tyr in the catalytic mechanism.

The protein belongs to the short-chain dehydrogenases/reductases (SDR) family.

Its pathway is antifungal biosynthesis. Short chain dehydrogenase; part of the gene cluster that mediates the biosynthesis of the tetrahydropyranyl antifungal agent restricticin that acts as an inhibitor of CYP51 and blocks the ergosterol biosynthesis. The highly reducing polyketide synthase resH, the short chain dehydrogenase resG, the cyclase resF, the FAD-dependent monooxygenase resA and the enoylreductase resD are required to generate the first stable intermediate desmethylrestrictinol. ResH with resD biosynthesize the first polyketide chain intermediate that is reduced by resG, followed by epoxidation by resA before 6-endo cyclization via epoxide opening by resF leads to desmethylrestrictinol. The methyltransferase resE then catalyzes the C4 O-methylation of desmethylrestrictinol to produce restrictinol, and the nonribosomal peptide synthetase resC catalyzes the C3 esterification of restrictinol with glycine that leads to restricticin. This is Short chain dehydrogenase resG from Aspergillus sclerotiorum.